The chain runs to 171 residues: Small ribosomal subunit protein mS25 (171 aa).

Belongs to the mitochondrion-specific ribosomal protein mS25 family. As to quaternary structure, component of the mitochondrial ribosome small subunit (28S) which comprises a 12S rRNA and about 30 distinct proteins.

The protein localises to the mitochondrion. The chain is Small ribosomal subunit protein mS25 (Mrps25) from Mus musculus (Mouse).